The sequence spans 62 residues: Large ribosomal subunit protein bL35 (62 aa).

The span at 1 to 26 (MPKMKTKSGLKKRIKITATGKVKRGN) shows a compositional bias: basic residues. The segment at 1–62 (MPKMKTKSGL…SDFKRYKELI (62 aa)) is disordered. The segment covering 53–62 (SDFKRYKELI) has biased composition (basic and acidic residues).

This sequence belongs to the bacterial ribosomal protein bL35 family.

The chain is Large ribosomal subunit protein bL35 from Metamycoplasma arthritidis (strain 158L3-1) (Mycoplasma arthritidis).